Consider the following 109-residue polypeptide: Cell division protein ZapA (109 aa).

Residues 71-99 are a coiled coil; sequence KTRDYASNMEQRIRMLQQTIEQALLEQGR.

The protein belongs to the ZapA family. Type 1 subfamily. As to quaternary structure, homodimer. Interacts with FtsZ.

It is found in the cytoplasm. Activator of cell division through the inhibition of FtsZ GTPase activity, therefore promoting FtsZ assembly into bundles of protofilaments necessary for the formation of the division Z ring. It is recruited early at mid-cell but it is not essential for cell division. This Serratia proteamaculans (strain 568) protein is Cell division protein ZapA.